An 871-amino-acid chain; its full sequence is Alanine--tRNA ligase (871 aa).

Histidine 563, histidine 567, cysteine 665, and histidine 669 together coordinate Zn(2+).

This sequence belongs to the class-II aminoacyl-tRNA synthetase family. Zn(2+) serves as cofactor.

The protein resides in the cytoplasm. It catalyses the reaction tRNA(Ala) + L-alanine + ATP = L-alanyl-tRNA(Ala) + AMP + diphosphate. In terms of biological role, catalyzes the attachment of alanine to tRNA(Ala) in a two-step reaction: alanine is first activated by ATP to form Ala-AMP and then transferred to the acceptor end of tRNA(Ala). Also edits incorrectly charged Ser-tRNA(Ala) and Gly-tRNA(Ala) via its editing domain. This is Alanine--tRNA ligase from Christiangramia forsetii (strain DSM 17595 / CGMCC 1.15422 / KT0803) (Gramella forsetii).